Consider the following 608-residue polypeptide: MDTNQELKTSEYLKGIVSNLPEKPGIYQYLNAEGTIIYVGKAKNLKRRVYSYFSKEHQPGKTRVLVSKIADIRYIVVNSEEDALLLENNLIKKYKPRYNVLLKDDKTYPSICVQNEYFPRVFKTRRIIRNGSSYYGPYSHSPSMHAVLDLIKHLYPLRTCNLNLSPENIRAGKFNVCLEYHIKNCAGPCIGLQSQEEYLKNIAEIKEILKGNTQEISRLLYQRMQDLAAEMKFEEAQKVKEKYALIENYRSKSEVVSSVLHNIDVFSIEEDGEKSAFINYLHITNGAINQAFTFEYKKKLNETKEELLTLGIIEMRERYKSASREIIVPFDIEIELNDVTFTIPQRGDKKKLLELSLLNVKQYKADRMKQAEKLNPEQRSMRLMKEIQQELHLDRLPMQIECFDNSNIQGTDAVAACVVFKKAKPSKSDYRKYNIKTVVGADDYASMKEVVRRRYQRAIEEESPLPDLIITDGGKGQMEVVRQVMEELQLDIPIAGLAKDRKHRTSEVLFGFPPQTIGIKQHSPLFRLLEQIQDEVHRFAITFHRDKRSKRQVASALDNIKGIGEKTKTALLKEFKSVKRIKEATIEEVSAIIGESKAKIIKEGLDNH.

A GIY-YIG domain is found at 22-100 (EKPGIYQYLN…IKKYKPRYNV (79 aa)). The region spanning 214–249 (QEISRLLYQRMQDLAAEMKFEEAQKVKEKYALIENY) is the UVR domain.

It belongs to the UvrC family. As to quaternary structure, interacts with UvrB in an incision complex.

The protein resides in the cytoplasm. Functionally, the UvrABC repair system catalyzes the recognition and processing of DNA lesions. UvrC both incises the 5' and 3' sides of the lesion. The N-terminal half is responsible for the 3' incision and the C-terminal half is responsible for the 5' incision. This is UvrABC system protein C from Bacteroides fragilis (strain ATCC 25285 / DSM 2151 / CCUG 4856 / JCM 11019 / LMG 10263 / NCTC 9343 / Onslow / VPI 2553 / EN-2).